The sequence spans 249 residues: Kallikrein-7 (249 aa).

The signal sequence occupies residues Met-1 to Gly-21. The propeptide at Gln-22–Arg-25 is activation peptide. Positions Ile-26 to Lys-246 are serine protease. 6 disulfide bridges follow: Cys-32–Cys-161, Cys-51–Cys-67, Cys-133–Cys-235, Cys-140–Cys-207, Cys-172–Cys-186, and Cys-197–Cys-222. Catalysis depends on charge relay system residues His-66 and Asp-108. Ser-201 serves as the catalytic Charge relay system.

It belongs to the peptidase S1 family. Kallikrein subfamily. In terms of tissue distribution, expressed in skin and, at lower levels, in lung, kidney, brain, heart and spleen. In skin, expressed in high suprabasal keratinocytes and in the luminal parts of hair follicles. Not detected in liver and skeletal muscle.

It localises to the secreted. The catalysed reaction is Cleavage of proteins with aromatic side chains in the P1 position.. Inhibited by Zn2+ and Cu2+ at low micromolar concentrations. Inhibited by SERPINA12. In terms of biological role, may catalyze the degradation of intercellular cohesive structures in the cornified layer of the skin in the continuous shedding of cells from the skin surface. Specific for amino acid residues with aromatic side chains in the P1 position. Cleaves insulin A chain at '14-Tyr-|-Gln-15' and insulin B chain at '6-Leu-|-Cys-7', '16-Tyr-|-Leu-17', '25-Phe-|-Tyr-26' and '26-Tyr-|-Thr-27'. Could play a role in the activation of precursors to inflammatory cytokines. The sequence is that of Kallikrein-7 (Klk7) from Mus musculus (Mouse).